We begin with the raw amino-acid sequence, 251 residues long: Flap endonuclease Xni (251 aa).

D104 provides a ligand contact to Mg(2+). Positions 160 to 249 (VQPQQLPDYW…IDGNLQQLRL (90 aa)) constitute a 5'-3' exonuclease domain. Residues L171, A172, P180, V182, and I185 each coordinate K(+). An interaction with DNA region spans residues 184 to 189 (GIGPKS).

This sequence belongs to the Xni family. The cofactor is Mg(2+). It depends on K(+) as a cofactor.

Has flap endonuclease activity. During DNA replication, flap endonucleases cleave the 5'-overhanging flap structure that is generated by displacement synthesis when DNA polymerase encounters the 5'-end of a downstream Okazaki fragment. The chain is Flap endonuclease Xni from Escherichia coli O45:K1 (strain S88 / ExPEC).